Consider the following 1201-residue polypeptide: Period circadian protein homolog 3 (1201 aa).

Positions 1–50 (MPRGEAPGPGRRGAKDEALGEESGERWSPEFHLQRKLADSSHSEQQDRNR) are disordered. Basic and acidic residues predominate over residues 13–50 (GAKDEALGEESGERWSPEFHLQRKLADSSHSEQQDRNR). The Nuclear export signal 1 motif lies at 55-64 (LIMVVQEMKK). PAS domains are found at residues 121 to 188 (IASE…RAQL) and 262 to 328 (YEAP…KVLK). Residues 337–380 (HSPIRFCTQNGDYIILDSSWSSFVNPWSRKISFIIGRHKVRTSP) enclose the PAC domain. The Nuclear export signal 3 signature appears at 403 to 412 (LQEQIYKLLL). The CSNK1E binding domain stretch occupies residues 555-760 (LKRKCISCTN…SSSNTGSGPR (206 aa)). Disordered stretches follow at residues 717 to 788 (YSYF…FPPA) and 881 to 923 (PSMS…RSSS). Over residues 721-731 (QGDSTSKQTRS) the composition is skewed to polar residues. Positions 729 to 745 (TRSAGCRKGKHKRKKLP) match the Nuclear localization signal motif. A compositionally biased stretch (basic residues) spans 733–743 (GCRKGKHKRKK). Low complexity-rich tracts occupy residues 767–783 (AQPCCPSAASSPHTSSP) and 881–890 (PSMSSAMSPT). Residues 900–911 (QRREEEKWEAQS) are compositionally biased toward basic and acidic residues. Ser919 bears the Phosphoserine mark. The Nuclear export signal 2 signature appears at 925-932 (LQLNLLQE). A disordered region spans residues 952-1067 (TEYCVTGNNG…GSAASGSSDS (116 aa)). Composition is skewed to polar residues over residues 957–976 (TGNNGSESSPATTGALSTGS), 983–994 (SHPTASALSTGS), 1001–1012 (SHPTASALSTGS), and 1035–1050 (TPSHPTATVLSTGSPP). 5 tandem repeats follow at residues 965–982 (SPATTGALSTGSPPRENP), 983–1000 (SHPTASALSTGSPPMKNP), 1001–1018 (SHPTASALSTGSPPMKNP), 1019–1036 (SHPTASTLSMGLPPSRTP), and 1037–1054 (SHPTATVLSTGSPPSESP). Residues 965 to 1054 (SPATTGALST…STGSPPSESP (90 aa)) form a 5 X 18 AA tandem repeats of S-[HP]-[AP]-T-[AT]-[GST]-[ATV]-L-S-[MT]-G-[LS]-P-P-[MRS]-[EKR]-[NST]-P region. Ser994 carries the phosphoserine modification. A Phosphoserine modification is found at Ser1053. A compositionally biased stretch (low complexity) spans 1053–1067 (SPSRTGSAASGSSDS). The interval 1123–1201 (ERVKEVVLKE…CGQVLVEDSC (79 aa)) is CRY binding domain.

In terms of assembly, homodimer. Component of the circadian core oscillator, which includes the CRY proteins, CLOCK or NPAS2, BMAL1 or BMAL2, CSNK1D and/or CSNK1E, TIMELESS and the PER proteins. Interacts directly with PER1, PER2, CRY1, CRY2, and TIMELESS; interaction with CRY1 and CRY2 is weak and not rhythmic. Interacts with FBXW11 and BTRC. In terms of processing, phosphorylation by CSNK1E is weak and appears to require association with PER1 and translocation to the nucleus. Post-translationally, ubiquitinated.

The protein resides in the cytoplasm. It localises to the nucleus. In terms of biological role, originally described as a core component of the circadian clock. The circadian clock, an internal time-keeping system, regulates various physiological processes through the generation of approximately 24 hour circadian rhythms in gene expression, which are translated into rhythms in metabolism and behavior. It is derived from the Latin roots 'circa' (about) and 'diem' (day) and acts as an important regulator of a wide array of physiological functions including metabolism, sleep, body temperature, blood pressure, endocrine, immune, cardiovascular, and renal function. Consists of two major components: the central clock, residing in the suprachiasmatic nucleus (SCN) of the brain, and the peripheral clocks that are present in nearly every tissue and organ system. Both the central and peripheral clocks can be reset by environmental cues, also known as Zeitgebers (German for 'timegivers'). The predominant Zeitgeber for the central clock is light, which is sensed by retina and signals directly to the SCN. The central clock entrains the peripheral clocks through neuronal and hormonal signals, body temperature and feeding-related cues, aligning all clocks with the external light/dark cycle. Circadian rhythms allow an organism to achieve temporal homeostasis with its environment at the molecular level by regulating gene expression to create a peak of protein expression once every 24 hours to control when a particular physiological process is most active with respect to the solar day. Transcription and translation of core clock components (CLOCK, NPAS2, BMAL1, BMAL2, PER1, PER2, PER3, CRY1 and CRY2) plays a critical role in rhythm generation, whereas delays imposed by post-translational modifications (PTMs) are important for determining the period (tau) of the rhythms (tau refers to the period of a rhythm and is the length, in time, of one complete cycle). A diurnal rhythm is synchronized with the day/night cycle, while the ultradian and infradian rhythms have a period shorter and longer than 24 hours, respectively. Disruptions in the circadian rhythms contribute to the pathology of cardiovascular diseases, cancer, metabolic syndromes and aging. A transcription/translation feedback loop (TTFL) forms the core of the molecular circadian clock mechanism. Transcription factors, CLOCK or NPAS2 and BMAL1 or BMAL2, form the positive limb of the feedback loop, act in the form of a heterodimer and activate the transcription of core clock genes and clock-controlled genes (involved in key metabolic processes), harboring E-box elements (5'-CACGTG-3') within their promoters. The core clock genes: PER1/2/3 and CRY1/2 which are transcriptional repressors form the negative limb of the feedback loop and interact with the CLOCK|NPAS2-BMAL1|BMAL2 heterodimer inhibiting its activity and thereby negatively regulating their own expression. This heterodimer also activates nuclear receptors NR1D1, NR1D2, RORA, RORB and RORG, which form a second feedback loop and which activate and repress BMAL1 transcription, respectively. Has a redundant role with the other PER proteins PER1 and PER2 and is not essential for the circadian rhythms maintenance. In contrast, plays an important role in sleep-wake timing and sleep homeostasis probably through the transcriptional regulation of sleep homeostasis-related genes, without influencing circadian parameters. Can bind heme. This chain is Period circadian protein homolog 3 (PER3), found in Homo sapiens (Human).